The sequence spans 117 residues: Cell cycle protein GpsB (117 aa).

Positions 32–70 (LDNVIKDYDAFVKENQRLQDENERLLAKVDELTRQVQVG) form a coiled coil.

It belongs to the GpsB family. In terms of assembly, forms polymers through the coiled coil domains. Interacts with PBP1, MreC and EzrA.

It localises to the cytoplasm. Divisome component that associates with the complex late in its assembly, after the Z-ring is formed, and is dependent on DivIC and PBP2B for its recruitment to the divisome. Together with EzrA, is a key component of the system that regulates PBP1 localization during cell cycle progression. Its main role could be the removal of PBP1 from the cell pole after pole maturation is completed. Also contributes to the recruitment of PBP1 to the division complex. Not essential for septum formation. This is Cell cycle protein GpsB from Levilactobacillus brevis (strain ATCC 367 / BCRC 12310 / CIP 105137 / JCM 1170 / LMG 11437 / NCIMB 947 / NCTC 947) (Lactobacillus brevis).